The chain runs to 470 residues: MSKVLTSLPAGERVGIAFSGGLDTSVAVAWMREKGAVPCTYTADIGQYDEPDIDSVPGRAGAYGAELARLVDCRAALVEEGLAALTTGAFHIRSAGRSYFNTTPLGRAVTGTLLVRAMLEDDVQIWGDGSTYKGNDIERFYRYGLLANPSLRIYKPWLDAGFVAELGGRKEMSEWLQARDLPYRASTEKAYSTDANIWGATHEAKRLEHLDVGVELVEPIMGVRFWDPEVEIAPEDVSIGFEQGRPVSINGATFESAVDLVLEANAIGGRHGLGMSDQIENRIIEAKSRGIYEAPGMALLHAAYERLVNAIHNEDTVASYHNEGRRLGRLMYEGRWLDPQALMLRESLQRWVGNAVTGTVTLRLRRGEDYSILDTQGPAFSYHPDKLSMERTEDSAFGPVDRIGQLTMRNLDIADSRAKLEQYAGMGMVGSSQVSLIGALESGGAEAIASRGESSGDELLDRAAMESGTD.

Residues A17–S25 and A43 each bind ATP. Y99 is a binding site for L-citrulline. Positions 129 and 131 each coordinate ATP. Residues T131, N135, and D136 each coordinate L-aspartate. Position 135 (N135) interacts with L-citrulline. D136 is a binding site for ATP. The L-citrulline site is built by R139 and S192. ATP is bound at residue D194. Residues T201, E203, and E280 each contribute to the L-citrulline site. The interval I448–D470 is disordered.

It belongs to the argininosuccinate synthase family. Type 2 subfamily. In terms of assembly, homotetramer.

It is found in the cytoplasm. It carries out the reaction L-citrulline + L-aspartate + ATP = 2-(N(omega)-L-arginino)succinate + AMP + diphosphate + H(+). The protein operates within amino-acid biosynthesis; L-arginine biosynthesis; L-arginine from L-ornithine and carbamoyl phosphate: step 2/3. The sequence is that of Argininosuccinate synthase from Kineococcus radiotolerans (strain ATCC BAA-149 / DSM 14245 / SRS30216).